The chain runs to 474 residues: E3 ubiquitin-protein ligase rnf168 (474 aa).

A compositionally biased stretch (basic and acidic residues) spans 1 to 12 (MPPVSEVDRGPV). The interval 1–20 (MPPVSEVDRGPVEESSGGLK) is disordered. An RING-type zinc finger spans residues 26 to 65 (CPVCLEIFLEPVTLPCMHTFCKPCFLETVDKSNMCCPLCR). The LR motif 1 motif lies at 119 to 137 (VCQPGELRKEYEDQISKLV). The UMI motif motif lies at 152–160 (EEYIQRLLA). The MIU motif 1 signature appears at 174-195 (EEQQLENDEKLARLLSLELNSG). Residues 192-203 (LNSGPASESTCN) show a composition bias toward polar residues. 2 disordered regions span residues 192–259 (LNSG…KPLS) and 367–474 (IQKE…NMGS). Positions 233–243 (PSSSDSSPDSS) are enriched in low complexity. Positions 353–376 (RWQQEEEDRRLALRIQKELDRENS) match the MIU motif 2 motif. Residues 367-383 (IQKELDRENSVDRRKGS) are compositionally biased toward basic and acidic residues. The LR motif 2 signature appears at 379–390 (RRKGSADSYQLR). Polar residues-rich tracts occupy residues 385–402 (DSYQ…TTSP) and 409–418 (KGSNTTTAKN). Positions 422-432 (RRGEEKTEKRL) are enriched in basic and acidic residues. Over residues 443–457 (VKTPVSSTAVSSTVK) the composition is skewed to low complexity.

It belongs to the RNF168 family. In terms of assembly, monomer.

It localises to the nucleus. The catalysed reaction is S-ubiquitinyl-[E2 ubiquitin-conjugating enzyme]-L-cysteine + [acceptor protein]-L-lysine = [E2 ubiquitin-conjugating enzyme]-L-cysteine + N(6)-ubiquitinyl-[acceptor protein]-L-lysine.. It participates in protein modification; protein ubiquitination. Its function is as follows. E3 ubiquitin-protein ligase required for accumulation of repair proteins to sites of DNA damage. Acts with ube2n/ubc13 to amplify the rnf8-dependent histone ubiquitination. Recruited to sites of DNA damage at double-strand breaks (DSBs) by binding to ubiquitinated histone H2A and ubiquitinates histone H2A and H2AX, leading to amplify the rnf8-dependent H2A ubiquitination and promoting the formation of 'Lys-63'-linked ubiquitin conjugates. This leads to concentrate ubiquitinated histones H2A and H2AX at DNA lesions. Catalyzes monoubiquitination of 'Lys-13' and 'Lys-15' of nucleosomal histone H2A (H2AK13Ub and H2AK15Ub, respectively). The chain is E3 ubiquitin-protein ligase rnf168 from Danio rerio (Zebrafish).